The following is a 581-amino-acid chain: Urease subunit alpha (581 aa).

The region spanning 134 to 581 (GGFDSHIHFI…LPMTQRYFLF (448 aa)) is the Urease domain. The Ni(2+) site is built by histidine 139, histidine 141, and lysine 222. Residue lysine 222 is modified to N6-carboxylysine. Histidine 224 provides a ligand contact to substrate. Ni(2+) is bound by residues histidine 251 and histidine 277. The active-site Proton donor is the histidine 325. Aspartate 365 contacts Ni(2+).

Belongs to the metallo-dependent hydrolases superfamily. Urease alpha subunit family. In terms of assembly, heterotrimer of UreA (gamma), UreB (beta) and UreC (alpha) subunits. Three heterotrimers associate to form the active enzyme. Ni cation is required as a cofactor. Post-translationally, carboxylation allows a single lysine to coordinate two nickel ions.

The protein resides in the cytoplasm. It catalyses the reaction urea + 2 H2O + H(+) = hydrogencarbonate + 2 NH4(+). It functions in the pathway nitrogen metabolism; urea degradation; CO(2) and NH(3) from urea (urease route): step 1/1. The protein is Urease subunit alpha of Albidiferax ferrireducens (strain ATCC BAA-621 / DSM 15236 / T118) (Rhodoferax ferrireducens).